Here is a 131-residue protein sequence, read N- to C-terminus: Antileukoproteinase (131 aa).

A signal peptide spans 1–25; sequence MKSCGLLPFTVLLALGILAPWTVEG. WAP domains follow at residues 29 to 77 and 83 to 131; these read DAIK…VNPV and VWRK…LPPM. 8 disulfide bridges follow: C36-C65, C44-C69, C52-C64, C58-C73, C90-C119, C97-C123, C106-C118, and C112-C127. The interval 85-131 is elastase inhibitory domain; that stretch reads RKPGRCVKTQARCMMLNPPNVCQRDGQCDGKYKCCEGICGKVCLPPM.

Interacts with GRN; interaction protects progranulin from proteolysis. As to expression, detected in bronchial epithelial cells. Detected in bronchoalveolar fluid after infection with M.tuberculosis (at protein level). Highest expression in lung, spleen, intestine and epididymis with lower levels in liver and seminal vesicle. No expression in brain, heart, kidney and muscle.

It localises to the secreted. Functionally, acid-stable proteinase inhibitor with strong affinities for trypsin, chymotrypsin, elastase, and cathepsin G. Modulates the innate immune response after bacterial infection. Contributes to regulate the inflammatory and immune responses to the intracellular parasite L.major. Down-regulates responses to bacterial lipopolysaccharide (LPS). Plays a role in regulating the activation of NF-kappa-B and inflammatory responses. Has antimicrobial activity against mycobacteria, but not against salmonella. Contributes to normal resistance against infection by M.tuberculosis. Required for normal resistance to L.major. Required for normal wound healing, probably by preventing tissue damage by limiting protease activity. Together with ELANE, required for normal differentiation and proliferation of bone marrow myeloid cells. The chain is Antileukoproteinase (Slpi) from Mus musculus (Mouse).